The primary structure comprises 400 residues: Argininosuccinate synthase (400 aa).

ATP-binding positions include 9-17 and alanine 37; that span reads AYSGGVDTS. An L-citrulline-binding site is contributed by tyrosine 88. Glycine 118 provides a ligand contact to ATP. L-aspartate contacts are provided by threonine 120, asparagine 124, and aspartate 125. Asparagine 124 is an L-citrulline binding site. Positions 128, 176, 185, 261, and 273 each coordinate L-citrulline.

It belongs to the argininosuccinate synthase family. Type 1 subfamily. As to quaternary structure, homotetramer.

It localises to the cytoplasm. The enzyme catalyses L-citrulline + L-aspartate + ATP = 2-(N(omega)-L-arginino)succinate + AMP + diphosphate + H(+). It functions in the pathway amino-acid biosynthesis; L-arginine biosynthesis; L-arginine from L-ornithine and carbamoyl phosphate: step 2/3. This is Argininosuccinate synthase from Prochlorococcus marinus (strain MIT 9211).